The primary structure comprises 143 residues: Interleukin-4 (143 aa).

Positions 1-19 (MGLSPQLAAVLLCLLVCTG) are cleaved as a signal peptide. 2 disulfides stabilise this stretch: cysteine 48–cysteine 88 and cysteine 70–cysteine 115. Residues asparagine 62 and asparagine 91 are each glycosylated (N-linked (GlcNAc...) asparagine).

Belongs to the IL-4/IL-13 family.

It localises to the secreted. In terms of biological role, participates in at least several B-cell activation processes as well as of other cell types. It is a costimulator of DNA-synthesis. It induces the expression of class II MHC molecules on resting B-cells. It enhances both secretion and cell surface expression of IgE and IgG1. It also regulates the expression of the low affinity Fc receptor for IgE (CD23) on both lymphocytes and monocytes. Positively regulates IL31RA expression in macrophages. Stimulates autophagy in dendritic cells by interfering with mTORC1 signaling and through the induction of RUFY4. The sequence is that of Interleukin-4 (IL4) from Meriones unguiculatus (Mongolian jird).